Consider the following 81-residue polypeptide: HssA/B-like protein 5 (81 aa).

It belongs to the hssA/B family.

The protein is HssA/B-like protein 5 (hssl5) of Dictyostelium discoideum (Social amoeba).